The primary structure comprises 131 residues: Small ribosomal subunit protein uS11 (131 aa).

The protein belongs to the universal ribosomal protein uS11 family. As to quaternary structure, part of the 30S ribosomal subunit. Interacts with proteins S7 and S18. Binds to IF-3.

Functionally, located on the platform of the 30S subunit, it bridges several disparate RNA helices of the 16S rRNA. Forms part of the Shine-Dalgarno cleft in the 70S ribosome. This chain is Small ribosomal subunit protein uS11, found in Cellvibrio japonicus (strain Ueda107) (Pseudomonas fluorescens subsp. cellulosa).